The primary structure comprises 144 residues: Probable nucleoside diphosphate kinase 5 (144 aa).

Residues K3, F51, R79, T85, R99, and N109 each contribute to the ATP site. The active-site Pros-phosphohistidine intermediate is H112.

The protein belongs to the NDK family.

The catalysed reaction is a 2'-deoxyribonucleoside 5'-diphosphate + ATP = a 2'-deoxyribonucleoside 5'-triphosphate + ADP. It catalyses the reaction a ribonucleoside 5'-diphosphate + ATP = a ribonucleoside 5'-triphosphate + ADP. Functionally, involved in the synthesis of nucleoside triphosphates other than ATP. The ATP gamma phosphate is transferred to the NDP beta phosphate via a ping-pong mechanism, using a phosphorylated active-site intermediate. This Arabidopsis thaliana (Mouse-ear cress) protein is Probable nucleoside diphosphate kinase 5.